The chain runs to 384 residues: A-type ATP synthase subunit C (384 aa).

This sequence belongs to the V-ATPase V0D/AC39 subunit family. Has multiple subunits with at least A(3), B(3), C, D, E, F, H, I and proteolipid K(x).

It is found in the cell membrane. Component of the A-type ATP synthase that produces ATP from ADP in the presence of a proton gradient across the membrane. The polypeptide is A-type ATP synthase subunit C (Methanobrevibacter smithii (strain ATCC 35061 / DSM 861 / OCM 144 / PS)).